We begin with the raw amino-acid sequence, 248 residues long: Ubiquinone biosynthesis O-methyltransferase (248 aa).

S-adenosyl-L-methionine is bound by residues Arg41, Gly72, Asp93, and Met136.

This sequence belongs to the methyltransferase superfamily. UbiG/COQ3 family.

The catalysed reaction is a 3-demethylubiquinol + S-adenosyl-L-methionine = a ubiquinol + S-adenosyl-L-homocysteine + H(+). It carries out the reaction a 3-(all-trans-polyprenyl)benzene-1,2-diol + S-adenosyl-L-methionine = a 2-methoxy-6-(all-trans-polyprenyl)phenol + S-adenosyl-L-homocysteine + H(+). Its pathway is cofactor biosynthesis; ubiquinone biosynthesis. Its function is as follows. O-methyltransferase that catalyzes the 2 O-methylation steps in the ubiquinone biosynthetic pathway. The protein is Ubiquinone biosynthesis O-methyltransferase of Sinorhizobium medicae (strain WSM419) (Ensifer medicae).